We begin with the raw amino-acid sequence, 279 residues long: Acetylglutamate kinase (279 aa).

Residues 64 to 65 (GG), arginine 86, and asparagine 177 contribute to the substrate site.

The protein belongs to the acetylglutamate kinase family. ArgB subfamily.

The protein localises to the cytoplasm. It carries out the reaction N-acetyl-L-glutamate + ATP = N-acetyl-L-glutamyl 5-phosphate + ADP. The protein operates within amino-acid biosynthesis; L-arginine biosynthesis; N(2)-acetyl-L-ornithine from L-glutamate: step 2/4. Its function is as follows. Catalyzes the ATP-dependent phosphorylation of N-acetyl-L-glutamate. The chain is Acetylglutamate kinase from Campylobacter jejuni subsp. jejuni serotype O:2 (strain ATCC 700819 / NCTC 11168).